Here is a 181-residue protein sequence, read N- to C-terminus: Crossover junction endodeoxyribonuclease RuvC (181 aa).

Residues Asp7, Glu67, and Asp139 contribute to the active site. Mg(2+) contacts are provided by Asp7, Glu67, and Asp139.

It belongs to the RuvC family. As to quaternary structure, homodimer which binds Holliday junction (HJ) DNA. The HJ becomes 2-fold symmetrical on binding to RuvC with unstacked arms; it has a different conformation from HJ DNA in complex with RuvA. In the full resolvosome a probable DNA-RuvA(4)-RuvB(12)-RuvC(2) complex forms which resolves the HJ. The cofactor is Mg(2+).

The protein localises to the cytoplasm. The catalysed reaction is Endonucleolytic cleavage at a junction such as a reciprocal single-stranded crossover between two homologous DNA duplexes (Holliday junction).. Functionally, the RuvA-RuvB-RuvC complex processes Holliday junction (HJ) DNA during genetic recombination and DNA repair. Endonuclease that resolves HJ intermediates. Cleaves cruciform DNA by making single-stranded nicks across the HJ at symmetrical positions within the homologous arms, yielding a 5'-phosphate and a 3'-hydroxyl group; requires a central core of homology in the junction. The consensus cleavage sequence is 5'-(A/T)TT(C/G)-3'. Cleavage occurs on the 3'-side of the TT dinucleotide at the point of strand exchange. HJ branch migration catalyzed by RuvA-RuvB allows RuvC to scan DNA until it finds its consensus sequence, where it cleaves and resolves the cruciform DNA. The sequence is that of Crossover junction endodeoxyribonuclease RuvC from Cupriavidus metallidurans (strain ATCC 43123 / DSM 2839 / NBRC 102507 / CH34) (Ralstonia metallidurans).